The sequence spans 268 residues: Tryptophan synthase alpha chain (268 aa).

Active-site proton acceptor residues include Glu-49 and Asp-60.

This sequence belongs to the TrpA family. In terms of assembly, tetramer of two alpha and two beta chains.

The enzyme catalyses (1S,2R)-1-C-(indol-3-yl)glycerol 3-phosphate + L-serine = D-glyceraldehyde 3-phosphate + L-tryptophan + H2O. It functions in the pathway amino-acid biosynthesis; L-tryptophan biosynthesis; L-tryptophan from chorismate: step 5/5. The alpha subunit is responsible for the aldol cleavage of indoleglycerol phosphate to indole and glyceraldehyde 3-phosphate. This is Tryptophan synthase alpha chain from Escherichia coli O6:H1 (strain CFT073 / ATCC 700928 / UPEC).